The sequence spans 312 residues: Ribosomal protein L11 methyltransferase (312 aa).

T162, G183, D205, and N248 together coordinate S-adenosyl-L-methionine.

The protein belongs to the methyltransferase superfamily. PrmA family.

The protein localises to the cytoplasm. The catalysed reaction is L-lysyl-[protein] + 3 S-adenosyl-L-methionine = N(6),N(6),N(6)-trimethyl-L-lysyl-[protein] + 3 S-adenosyl-L-homocysteine + 3 H(+). Methylates ribosomal protein L11. This Bacillus cytotoxicus (strain DSM 22905 / CIP 110041 / 391-98 / NVH 391-98) protein is Ribosomal protein L11 methyltransferase.